We begin with the raw amino-acid sequence, 435 residues long: Histidinol dehydrogenase (435 aa).

NAD(+) contacts are provided by Y131, Q189, and N212. Residues S238, Q260, and H263 each coordinate substrate. Q260 and H263 together coordinate Zn(2+). Catalysis depends on proton acceptor residues E327 and H328. Substrate is bound by residues H328, D361, E415, and H420. Zn(2+) is bound at residue D361. Zn(2+) is bound at residue H420.

The protein belongs to the histidinol dehydrogenase family. As to quaternary structure, homodimer. It depends on Zn(2+) as a cofactor.

It carries out the reaction L-histidinol + 2 NAD(+) + H2O = L-histidine + 2 NADH + 3 H(+). It functions in the pathway amino-acid biosynthesis; L-histidine biosynthesis; L-histidine from 5-phospho-alpha-D-ribose 1-diphosphate: step 9/9. Catalyzes the sequential NAD-dependent oxidations of L-histidinol to L-histidinaldehyde and then to L-histidine. This chain is Histidinol dehydrogenase (hisD), found in Buchnera aphidicola subsp. Acyrthosiphon pisum (strain APS) (Acyrthosiphon pisum symbiotic bacterium).